Here is a 95-residue protein sequence, read N- to C-terminus: Large ribosomal subunit protein bL25 (95 aa).

It belongs to the bacterial ribosomal protein bL25 family. In terms of assembly, part of the 50S ribosomal subunit; part of the 5S rRNA/L5/L18/L25 subcomplex. Contacts the 5S rRNA. Binds to the 5S rRNA independently of L5 and L18.

This is one of the proteins that binds to the 5S RNA in the ribosome where it forms part of the central protuberance. The polypeptide is Large ribosomal subunit protein bL25 (Haemophilus influenzae (strain ATCC 51907 / DSM 11121 / KW20 / Rd)).